A 107-amino-acid polypeptide reads, in one-letter code: uncharacterized protein (107 aa).

Positions 87–107 (KNRNGPKAEKRRPYVRAHAKW) are disordered.

This is an uncharacterized protein from Saccharomyces cerevisiae (strain ATCC 204508 / S288c) (Baker's yeast).